The following is an 88-amino-acid chain: Sec-independent protein translocase protein TatA (88 aa).

A helical transmembrane segment spans residues 3 to 23 (IFGVGLPEVTVILILALLIFG). The disordered stretch occupies residues 56–88 (MNEQDKDESPISIESNQTNEINQEKIDSENSKK). Residues 67-76 (SIESNQTNEI) are compositionally biased toward polar residues. Positions 77 to 88 (NQEKIDSENSKK) are enriched in basic and acidic residues.

The protein belongs to the TatA/E family. As to quaternary structure, forms a complex with TatC.

Its subcellular location is the cell inner membrane. In terms of biological role, part of the twin-arginine translocation (Tat) system that transports large folded proteins containing a characteristic twin-arginine motif in their signal peptide across membranes. TatA could form the protein-conducting channel of the Tat system. This Prochlorococcus marinus (strain AS9601) protein is Sec-independent protein translocase protein TatA.